The following is a 1050-amino-acid chain: Beta-galactosidase (1050 aa).

The substrate site is built by Asn-110 and Asp-209. A Na(+)-binding site is contributed by Asp-209. 3 residues coordinate Mg(2+): Glu-432, His-434, and Glu-477. Residues Glu-477 and 553–556 each bind substrate; that span reads EYAH. Catalysis depends on Glu-477, which acts as the Proton donor. The Nucleophile role is filled by Glu-553. Asn-613 serves as a coordination point for Mg(2+). Residues Phe-617 and Asn-620 each contribute to the Na(+) site. Substrate-binding residues include Asn-620 and Trp-1023.

It belongs to the glycosyl hydrolase 2 family. As to quaternary structure, homotetramer. Mg(2+) serves as cofactor. The cofactor is Na(+).

It catalyses the reaction Hydrolysis of terminal non-reducing beta-D-galactose residues in beta-D-galactosides.. The protein is Beta-galactosidase of Yersinia enterocolitica serotype O:8 / biotype 1B (strain NCTC 13174 / 8081).